Consider the following 1452-residue polypeptide: ABC-type transporter adrC (1452 aa).

Residues 1 to 38 (MAPEEGDQAMSHEDKAACSSLNTTSSTELFDGAPSSEN) are disordered. Over residues 19–28 (SSLNTTSSTE) the composition is skewed to polar residues. An ABC transporter 1 domain is found at 116–378 (KRLMSIVGNK…FETMGWKRPP (263 aa)). 6 helical membrane-spanning segments follow: residues 487–507 (IPAL…IGSL), 524–544 (VLFL…TTLY), 569–589 (VIVD…IVYF), 598–618 (SHFF…ATIF), 631–651 (AMAL…FTVP), and 738–758 (GILV…TELI). Residues 813-1055 (FSWKGLSYDI…TVLEYLEDKG (243 aa)) enclose the ABC transporter 2 domain. 849-856 (GVSGAGKT) lines the ATP pocket. 7 helical membrane-spanning segments follow: residues 1149–1169 (YILA…FSFW), 1181–1201 (VLFS…QIMP), 1224–1244 (VFIL…GICT), 1264–1284 (LVLL…QLVV), 1287–1307 (VPSV…CLLF), 1322–1344 (IFMN…ALHG), and 1415–1435 (FGIF…LYYL).

Belongs to the ABC transporter superfamily. ABCG family. PDR (TC 3.A.1.205) subfamily.

The protein resides in the membrane. ABC-type transporter; part of the gene cluster that mediates the biosynthesis of the meroterpenoid compound andrastin A, a promising antitumoral compound. Is required for the production of andrastin A but does not have a significant role in its secretion. The polypeptide is ABC-type transporter adrC (Penicillium roqueforti).